Consider the following 338-residue polypeptide: D-erythrose-4-phosphate dehydrogenase (338 aa).

11-12 (RI) is a binding site for NAD(+). Substrate contacts are provided by residues 153–155 (SCT), Arg199, 212–213 (TK), and Arg235. Cys154 acts as the Nucleophile in catalysis. An NAD(+)-binding site is contributed by Asn317.

The protein belongs to the glyceraldehyde-3-phosphate dehydrogenase family. Epd subfamily. As to quaternary structure, homotetramer.

Its subcellular location is the cytoplasm. It carries out the reaction D-erythrose 4-phosphate + NAD(+) + H2O = 4-phospho-D-erythronate + NADH + 2 H(+). It functions in the pathway cofactor biosynthesis; pyridoxine 5'-phosphate biosynthesis; pyridoxine 5'-phosphate from D-erythrose 4-phosphate: step 1/5. Catalyzes the NAD-dependent conversion of D-erythrose 4-phosphate to 4-phosphoerythronate. The chain is D-erythrose-4-phosphate dehydrogenase from Shewanella putrefaciens (strain CN-32 / ATCC BAA-453).